A 254-amino-acid polypeptide reads, in one-letter code: Glutamate racemase (254 aa).

Substrate contacts are provided by residues Asp-7–Ser-8 and Tyr-39–Gly-40. The active-site Proton donor/acceptor is the Cys-70. Residues Asn-71 to Thr-72 and Glu-147 each bind substrate. The Proton donor/acceptor role is filled by Cys-178. Thr-179 to His-180 contributes to the substrate binding site.

It belongs to the aspartate/glutamate racemases family. In terms of assembly, homodimer.

The catalysed reaction is L-glutamate = D-glutamate. The protein operates within cell wall biogenesis; peptidoglycan biosynthesis. Its function is as follows. Provides the (R)-glutamate required for cell wall biosynthesis. Converts L- or D-glutamate to D- or L-glutamate, respectively, but not other amino acids such as alanine, aspartate, and glutamine. This is Glutamate racemase from Aquifex pyrophilus.